An 884-amino-acid polypeptide reads, in one-letter code: Translation initiation factor IF-2 (884 aa).

Disordered regions lie at residues aspartate 42–valine 62 and glutamate 123–lysine 254. Over residues proline 194–alanine 212 the composition is skewed to basic and acidic residues. A compositionally biased stretch (low complexity) spans glutamate 234 to glycine 248. The 170-residue stretch at lysine 384–lysine 553 folds into the tr-type G domain. The tract at residues glycine 393 to threonine 400 is G1. Glycine 393 to threonine 400 serves as a coordination point for GTP. The interval glycine 418–histidine 422 is G2. The tract at residues aspartate 439–glycine 442 is G3. GTP-binding positions include aspartate 439–histidine 443 and asparagine 493–aspartate 496. The G4 stretch occupies residues asparagine 493 to aspartate 496. A G5 region spans residues serine 529–lysine 531.

Belongs to the TRAFAC class translation factor GTPase superfamily. Classic translation factor GTPase family. IF-2 subfamily.

It localises to the cytoplasm. In terms of biological role, one of the essential components for the initiation of protein synthesis. Protects formylmethionyl-tRNA from spontaneous hydrolysis and promotes its binding to the 30S ribosomal subunits. Also involved in the hydrolysis of GTP during the formation of the 70S ribosomal complex. This Geobacter metallireducens (strain ATCC 53774 / DSM 7210 / GS-15) protein is Translation initiation factor IF-2.